A 302-amino-acid polypeptide reads, in one-letter code: UDP-N-acetylenolpyruvoylglucosamine reductase (302 aa).

Residues 27–192 enclose the FAD-binding PCMH-type domain; the sequence is KTGGPADYVA…VSVTFGLKPG (166 aa). The active site involves arginine 171. Catalysis depends on serine 221, which acts as the Proton donor. Glutamate 291 is an active-site residue.

This sequence belongs to the MurB family. The cofactor is FAD.

It localises to the cytoplasm. The catalysed reaction is UDP-N-acetyl-alpha-D-muramate + NADP(+) = UDP-N-acetyl-3-O-(1-carboxyvinyl)-alpha-D-glucosamine + NADPH + H(+). Its pathway is cell wall biogenesis; peptidoglycan biosynthesis. Cell wall formation. The sequence is that of UDP-N-acetylenolpyruvoylglucosamine reductase from Lactiplantibacillus plantarum (strain ATCC BAA-793 / NCIMB 8826 / WCFS1) (Lactobacillus plantarum).